A 307-amino-acid chain; its full sequence is Taste receptor type 2 member 10 (307 aa).

Residues 1-6 (MLSVVE) are Extracellular-facing. Residues 7-27 (GILILVVISESVFGVLGNGFI) traverse the membrane as a helical segment. Over 28-42 (GLVNCIDCAKNKLST) the chain is Cytoplasmic. Residues 43 to 63 (IGFILTGLAISRIFLIWIIIT) form a helical membrane-spanning segment. The Extracellular portion of the chain corresponds to 64-100 (DGFIQIFSPDVYASGNLIEYISYFWVITNQSSIWFAT). Residue Asn92 is glycosylated (N-linked (GlcNAc...) asparagine). The helical transmembrane segment at 101–121 (SLSIFYFLKIANFSNYIFLWL) threads the bilayer. The Cytoplasmic portion of the chain corresponds to 122 to 126 (KSRIN). Residues 127 to 147 (RVLPLLMGFLLISCLLNFAYI) form a helical membrane-spanning segment. At 148-179 (VKILNDLKMKNDTVWRLNMYKSEYFIKQLLLN) the chain is on the extracellular side. Asn158 carries N-linked (GlcNAc...) asparagine glycosylation. The chain crosses the membrane as a helical span at residues 180-200 (LGVIFFFTLSLITSVLLIISL). Residues 201–227 (WRHNRQMQSNVTGLRDSITEAHVKAMK) are Cytoplasmic-facing. The chain crosses the membrane as a helical span at residues 228–248 (VLISFIILFILYFIGIAIEIS). Over 249–257 (YFTVPENKL) the chain is Extracellular. Residues 258–278 (LLIFGMTTTAIYPWGHSFILI) traverse the membrane as a helical segment. Over 279-307 (LGNSKLKQASLRVLQQLKCCEERKNLRAT) the chain is Cytoplasmic.

Belongs to the G-protein coupled receptor T2R family.

It localises to the membrane. Receptor that may play a role in the perception of bitterness and is gustducin-linked. May play a role in sensing the chemical composition of the gastrointestinal content. The activity of this receptor may stimulate alpha gustducin, mediate PLC-beta-2 activation and lead to the gating of TRPM5. The protein is Taste receptor type 2 member 10 (TAS2R10) of Papio hamadryas (Hamadryas baboon).